The sequence spans 91 residues: UPF0250 protein BP0104 (91 aa).

This sequence belongs to the UPF0250 family.

This chain is UPF0250 protein BP0104, found in Bordetella pertussis (strain Tohama I / ATCC BAA-589 / NCTC 13251).